The following is a 101-amino-acid chain: Small ribosomal subunit protein uS14 (101 aa).

It belongs to the universal ribosomal protein uS14 family. As to quaternary structure, part of the 30S ribosomal subunit. Contacts proteins S3 and S10.

In terms of biological role, binds 16S rRNA, required for the assembly of 30S particles and may also be responsible for determining the conformation of the 16S rRNA at the A site. In Janthinobacterium sp. (strain Marseille) (Minibacterium massiliensis), this protein is Small ribosomal subunit protein uS14.